The following is a 349-amino-acid chain: Isopentenyl-diphosphate delta-isomerase (349 aa).

Residue 9 to 10 (RK) coordinates substrate. FMN contacts are provided by residues 65–67 (AMT), S95, and N124. 95–97 (STH) is a substrate binding site. Residue Q154 coordinates substrate. E155 is a Mg(2+) binding site. FMN contacts are provided by residues K186, S211, T216, 262 to 264 (GLR), and 283 to 284 (SR).

It belongs to the IPP isomerase type 2 family. Homooctamer. Dimer of tetramers. Requires FMN as cofactor. NADPH serves as cofactor. It depends on Mg(2+) as a cofactor.

It is found in the cytoplasm. It carries out the reaction isopentenyl diphosphate = dimethylallyl diphosphate. Functionally, involved in the biosynthesis of isoprenoids. Catalyzes the 1,3-allylic rearrangement of the homoallylic substrate isopentenyl (IPP) to its allylic isomer, dimethylallyl diphosphate (DMAPP). The chain is Isopentenyl-diphosphate delta-isomerase from Staphylococcus aureus (strain USA300 / TCH1516).